A 436-amino-acid chain; its full sequence is GTPase Der (436 aa).

EngA-type G domains lie at 4 to 167 (PVVA…PKDH) and 176 to 351 (IKFC…DNHA). GTP is bound by residues 10 to 17 (GRPNVGKS), 57 to 61 (DTGGI), 119 to 122 (NKID), 182 to 189 (GRPNVGKS), 229 to 233 (DTAGM), and 294 to 297 (NKWD). The region spanning 352-436 (MRVQTNVLNE…PIKIIARPRK (85 aa)) is the KH-like domain.

Belongs to the TRAFAC class TrmE-Era-EngA-EngB-Septin-like GTPase superfamily. EngA (Der) GTPase family. Associates with the 50S ribosomal subunit.

In terms of biological role, GTPase that plays an essential role in the late steps of ribosome biogenesis. The polypeptide is GTPase Der (Geobacillus thermodenitrificans (strain NG80-2)).